Reading from the N-terminus, the 245-residue chain is Mannose/glucose-specific lectin (245 aa).

Positions 87 and 107 each coordinate a carbohydrate. A glycan (N-linked (GlcNAc...) asparagine) is linked at N119. Mn(2+) is bound by residues E129 and D131. Residues D131 and F133 each coordinate Ca(2+). A carbohydrate contacts are provided by S138 and N139. Positions 139 and 142 each coordinate Ca(2+). 2 residues coordinate Mn(2+): D142 and H147. A carbohydrate is bound by residues G221, E222, and Q223.

This sequence belongs to the leguminous lectin family. As to quaternary structure, homodimer.

Functionally, mannose/glucose-specific lectin that also binds derivatives N-acetyl-D-glucosamine and alpha-methyl-D-mannopyranoside with even higher affinity. Has hemagglutinating activity towards rabbit erythrocytes. Is toxic towards brine shrimp A.nauplii. In rats, induces dose-dependent paw edema. This is Mannose/glucose-specific lectin from Centrolobium tomentosum (Arariba).